Here is a 137-residue protein sequence, read N- to C-terminus: Putative pre-16S rRNA nuclease (137 aa).

It belongs to the YqgF nuclease family.

It is found in the cytoplasm. Could be a nuclease involved in processing of the 5'-end of pre-16S rRNA. This is Putative pre-16S rRNA nuclease from Actinobacillus pleuropneumoniae serotype 7 (strain AP76).